The primary structure comprises 591 residues: Frizzled and smoothened-like protein F (591 aa).

An N-terminal signal peptide occupies residues 1-17; it reads MKILIIFIIFIISYISG. At 18 to 244 the chain is on the extracellular side; that stretch reads FEIPKGFGIG…KWDQLLTMSK (227 aa). The FZ domain occupies 30 to 177; sequence IPDAECLNYI…GTFAVPCSDP (148 aa). 3 disulfide bridges follow: Cys-35/Cys-105, Cys-48/Cys-98, and Cys-123/Cys-174. 4 N-linked (GlcNAc...) asparagine glycosylation sites follow: Asn-167, Asn-187, Asn-202, and Asn-230. Residues 245–265 form a helical membrane-spanning segment; the sequence is ILSTISFILSLYNVLTFGIIN. Residues 266 to 275 are Cytoplasmic-facing; that stretch reads KKVSDPHKCT. The helical transmembrane segment at 276–296 threads the bilayer; it reads CFFSGSIALVNLCDIITYGIG. The Extracellular segment spans residues 297-321; the sequence is YEELLCPEPGRSAKQQLDPVCGLTG. A helical transmembrane segment spans residues 322 to 342; that stretch reads AFFHLGITYCVLWSMTMGLVL. Residues 343–353 are Cytoplasmic-facing; sequence YCSVKRQKWFK. Residues 354–374 traverse the membrane as a helical segment; sequence FNYFLIGNTTFTITTVVIAAA. At 375 to 397 the chain is on the extracellular side; sequence TSKFEAGLGSIECWIRDRWYAIS. A helical transmembrane segment spans residues 398–418; sequence LFWIPCGIALLIGSFCIIAVI. At 419-442 the chain is on the cytoplasmic side; that stretch reads HEVYKTSKKSISNRNDLLQRELKP. The helical transmembrane segment at 443–463 threads the bilayer; that stretch reads LLIVIFISGSFLYLFIFFFDI. The Extracellular segment spans residues 464 to 495; the sequence is ERKFGGYRSAVEDYVLCLLNGSQEECFTTGPS. Residue Asn-483 is glycosylated (N-linked (GlcNAc...) asparagine). Residues 496–516 traverse the membrane as a helical segment; it reads YVPYFLFYLVIRWFGIIFFLF. At 517–591 the chain is on the cytoplasmic side; that stretch reads YGTSNIARKI…AVELESIKIN (75 aa). Residues 538-571 are compositionally biased toward low complexity; that stretch reads SSISPKSTPKSSPKNSDSKINSNSTNNNNMILND. The interval 538–573 is disordered; that stretch reads SSISPKSTPKSSPKNSDSKINSNSTNNNNMILNDNN.

Belongs to the G-protein coupled receptor Fz/Smo family.

It localises to the membrane. The chain is Frizzled and smoothened-like protein F (fslF) from Dictyostelium discoideum (Social amoeba).